We begin with the raw amino-acid sequence, 340 residues long: Glycerol-3-phosphate dehydrogenase [NAD(P)+] (340 aa).

Residues serine 14, phenylalanine 15, arginine 35, and lysine 109 each contribute to the NADPH site. 2 residues coordinate sn-glycerol 3-phosphate: lysine 109 and glycine 137. Position 141 (alanine 141) interacts with NADPH. Residues lysine 192, aspartate 245, serine 255, arginine 256, and asparagine 257 each coordinate sn-glycerol 3-phosphate. Lysine 192 acts as the Proton acceptor in catalysis. Arginine 256 provides a ligand contact to NADPH. NADPH-binding residues include valine 280 and glutamate 282.

The protein belongs to the NAD-dependent glycerol-3-phosphate dehydrogenase family.

The protein resides in the cytoplasm. The enzyme catalyses sn-glycerol 3-phosphate + NAD(+) = dihydroxyacetone phosphate + NADH + H(+). It catalyses the reaction sn-glycerol 3-phosphate + NADP(+) = dihydroxyacetone phosphate + NADPH + H(+). It functions in the pathway membrane lipid metabolism; glycerophospholipid metabolism. Functionally, catalyzes the reduction of the glycolytic intermediate dihydroxyacetone phosphate (DHAP) to sn-glycerol 3-phosphate (G3P), the key precursor for phospholipid synthesis. The sequence is that of Glycerol-3-phosphate dehydrogenase [NAD(P)+] from Teredinibacter turnerae (strain ATCC 39867 / T7901).